Here is a 502-residue protein sequence, read N- to C-terminus: MTRPVLVLVHGWGCDSRTWQPVLDGLRELVPVQLVDLPGFGNTPALETFSLPAVLAAIESQLPERCVLLGWSLGAMLAVQLAARLPQQVLGVISLAANARFVASDDYPHAMAPDVNRQFNSRFAEQPQAALKMFTGLLAQGDVQERALLKQLRTQVPDAINHNWAQALQLLAELDNRAALVQLSQPLLHLLAEQDALVPIAAAESLRGLNSQHQIHVIAGSAHAVHWSQPQQLISAVQDFYETLATAVDKKRVAQSFGKAAATYDSVAGLQRAVGAQLLDYLPAQLDRTRLLDIGSGTGFFTAQLATRGAEVIALDIAQGMLDFARQQHPQAADWVCGDAENLPFAQSSVDFIFSSLVIQWCARVPQLMQELARVLKPGGRAYISTLGPGTLVELKRAWQQVDNYVHVNRFVGRTSLEQAVQQAGMQCLAFVESTRRLYFSRLRDLTHELKALGAHNINPGQAQGLTGRQRLQAFSLAYERERSPQGLPASYEVYYLVLCKP.

The interval 1–224 is carboxylesterase; the sequence is MTRPVLVLVH…IHVIAGSAHA (224 aa). Tryptophan 12 is a substrate binding site. Serine 72 serves as the catalytic Nucleophile. Residue 134–138 participates in substrate binding; it reads FTGLL. Active-site residues include aspartate 195 and histidine 223. Histidine 223 provides a ligand contact to substrate. A malonyl-ACP O-methyltransferase region spans residues 225–502; the sequence is VHWSQPQQLI…EVYYLVLCKP (278 aa).

It in the N-terminal section; belongs to the AB hydrolase superfamily. Carboxylesterase BioH family. The protein in the C-terminal section; belongs to the methyltransferase superfamily.

The enzyme catalyses a carboxylic ester + H2O = an alcohol + a carboxylate + H(+). It carries out the reaction malonyl-[ACP] + S-adenosyl-L-methionine = malonyl-[ACP] methyl ester + S-adenosyl-L-homocysteine. It participates in cofactor biosynthesis; biotin biosynthesis. In terms of biological role, converts the free carboxyl group of a malonyl-thioester to its methyl ester by transfer of a methyl group from S-adenosyl-L-methionine (SAM). It allows to synthesize pimeloyl-ACP via the fatty acid synthetic pathway. Functionally, the physiological role of BioH is to remove the methyl group introduced by BioC when the pimeloyl moiety is complete. It allows to synthesize pimeloyl-ACP via the fatty acid synthetic pathway through the hydrolysis of the ester bonds of pimeloyl-ACP esters. This chain is Biotin biosynthesis bifunctional protein BioHC (bioC), found in Cellvibrio japonicus (strain Ueda107) (Pseudomonas fluorescens subsp. cellulosa).